The sequence spans 575 residues: 2-succinyl-5-enolpyruvyl-6-hydroxy-3-cyclohexene-1-carboxylate synthase (575 aa).

Belongs to the TPP enzyme family. MenD subfamily. As to quaternary structure, homodimer. It depends on Mg(2+) as a cofactor. Mn(2+) serves as cofactor. Requires thiamine diphosphate as cofactor.

It carries out the reaction isochorismate + 2-oxoglutarate + H(+) = 5-enolpyruvoyl-6-hydroxy-2-succinyl-cyclohex-3-ene-1-carboxylate + CO2. Its pathway is quinol/quinone metabolism; 1,4-dihydroxy-2-naphthoate biosynthesis; 1,4-dihydroxy-2-naphthoate from chorismate: step 2/7. The protein operates within quinol/quinone metabolism; menaquinone biosynthesis. Its function is as follows. Catalyzes the thiamine diphosphate-dependent decarboxylation of 2-oxoglutarate and the subsequent addition of the resulting succinic semialdehyde-thiamine pyrophosphate anion to isochorismate to yield 2-succinyl-5-enolpyruvyl-6-hydroxy-3-cyclohexene-1-carboxylate (SEPHCHC). The protein is 2-succinyl-5-enolpyruvyl-6-hydroxy-3-cyclohexene-1-carboxylate synthase of Syntrophus aciditrophicus (strain SB).